The primary structure comprises 298 residues: Lipoyl synthase (298 aa).

[4Fe-4S] cluster contacts are provided by cysteine 40, cysteine 45, cysteine 51, cysteine 67, cysteine 71, cysteine 74, and serine 280. The region spanning 53–269 (AVRRTATFMI…KEIAMQKGFS (217 aa)) is the Radical SAM core domain.

This sequence belongs to the radical SAM superfamily. Lipoyl synthase family. [4Fe-4S] cluster serves as cofactor.

The protein localises to the cytoplasm. It carries out the reaction [[Fe-S] cluster scaffold protein carrying a second [4Fe-4S](2+) cluster] + N(6)-octanoyl-L-lysyl-[protein] + 2 oxidized [2Fe-2S]-[ferredoxin] + 2 S-adenosyl-L-methionine + 4 H(+) = [[Fe-S] cluster scaffold protein] + N(6)-[(R)-dihydrolipoyl]-L-lysyl-[protein] + 4 Fe(3+) + 2 hydrogen sulfide + 2 5'-deoxyadenosine + 2 L-methionine + 2 reduced [2Fe-2S]-[ferredoxin]. The protein operates within protein modification; protein lipoylation via endogenous pathway; protein N(6)-(lipoyl)lysine from octanoyl-[acyl-carrier-protein]. Its function is as follows. Catalyzes the radical-mediated insertion of two sulfur atoms into the C-6 and C-8 positions of the octanoyl moiety bound to the lipoyl domains of lipoate-dependent enzymes, thereby converting the octanoylated domains into lipoylated derivatives. This is Lipoyl synthase from Bacillus velezensis (strain DSM 23117 / BGSC 10A6 / LMG 26770 / FZB42) (Bacillus amyloliquefaciens subsp. plantarum).